The primary structure comprises 258 residues: Homeobox-leucine zipper protein ATHB-7 (258 aa).

The homeobox DNA-binding region spans 29–88; that stretch reads NKNNQRRFSDEQIKSLEMMFESETRLEPRKKVQLARELGLQPRQVAIWFQNKRARWKSKQ. Positions 89-124 are leucine-zipper; that stretch reads LETEYNILRQNYDNLASQFESLKKEKQALVSELQRL. Positions 149-183 are disordered; that stretch reads SSTHHESENEENRRRKPEEVRPEMEMKDDKGHHGV. Residues 151–183 show a composition bias toward basic and acidic residues; the sequence is THHESENEENRRRKPEEVRPEMEMKDDKGHHGV.

It belongs to the HD-ZIP homeobox family. Class I subfamily. In terms of assembly, interacts with TBP2 and TFIIB1. Widely expressed.

The protein localises to the nucleus. In terms of biological role, probable transcription activator that may act as growth regulators in response to water deficit. This is Homeobox-leucine zipper protein ATHB-7 (ATHB-7) from Arabidopsis thaliana (Mouse-ear cress).